Reading from the N-terminus, the 202-residue chain is MVRGKVQMRRIENPVHRQVTFCKRRGGLLKKARELSVLCDADVGVIIFSSQGKLHELATNGNMHNLVERYQSNVAGGQMEPGALQRQQVAEQGIFLLREEIDLLQRGLRSTYGGGAGEMTLDKLHALEKGLELWIYQIRTTKMQMMQQEIQFLRNKEGILKEANEMLQEKVKEQQKLYMSLLDLHSQQPTQPMTYGNRFFSI.

In terms of domain architecture, MADS-box spans 1–61 (MVRGKVQMRR…GKLHELATNG (61 aa)). Residues 87-177 (QQVAEQGIFL…QEKVKEQQKL (91 aa)) enclose the K-box domain.

As to expression, expressed in seedling roots.

The protein resides in the nucleus. Its function is as follows. Probable transcription factor. This Oryza sativa subsp. japonica (Rice) protein is MADS-box transcription factor 33 (MADS33).